Here is a 130-residue protein sequence, read N- to C-terminus: Ribonuclease P protein component (130 aa).

It belongs to the RnpA family. In terms of assembly, consists of a catalytic RNA component (M1 or rnpB) and a protein subunit.

It carries out the reaction Endonucleolytic cleavage of RNA, removing 5'-extranucleotides from tRNA precursor.. In terms of biological role, RNaseP catalyzes the removal of the 5'-leader sequence from pre-tRNA to produce the mature 5'-terminus. It can also cleave other RNA substrates such as 4.5S RNA. The protein component plays an auxiliary but essential role in vivo by binding to the 5'-leader sequence and broadening the substrate specificity of the ribozyme. The chain is Ribonuclease P protein component from Azotobacter vinelandii (strain DJ / ATCC BAA-1303).